We begin with the raw amino-acid sequence, 147 residues long: Bis(5'-nucleosyl)-tetraphosphatase [asymmetrical] (147 aa).

A2 is modified (N-acetylalanine). Residues 2–139 (ALRACGLIIF…DMKAVLQEGH (138 aa)) enclose the Nudix hydrolase domain. The Nudix box signature appears at 43–64 (GHVEPGESDLQTALRETQEEAG).

The protein belongs to the Nudix hydrolase family. The cofactor is a divalent metal cation.

The enzyme catalyses P(1),P(4)-bis(5'-guanosyl) tetraphosphate + H2O = GMP + GTP + 2 H(+). It catalyses the reaction a 5'-end CoA-ribonucleoside in mRNA + H2O = a 5'-end phospho-adenosine-phospho-ribonucleoside in mRNA + (R)-4'-phosphopantetheine + 2 H(+). The catalysed reaction is a 5'-end FAD-phospho-ribonucleoside in mRNA + H2O = a 5'-end phospho-adenosine-phospho-ribonucleoside in mRNA + FMN + 2 H(+). With respect to regulation, inhibited by fluoride ions. Functionally, catalyzes the asymmetric hydrolysis of diadenosine 5',5'''-P1,P4-tetraphosphate (Ap4A) to yield AMP and ATP. Exhibits decapping activity towards FAD-capped RNAs and dpCoA-capped RNAs in vitro. The protein is Bis(5'-nucleosyl)-tetraphosphatase [asymmetrical] (NUDT2) of Sus scrofa (Pig).